The following is a 156-amino-acid chain: Transcription elongation factor GreA (156 aa).

A coiled-coil region spans residues 2–27 (EKTFPMTKEGLDKLKAELENLKLVKR).

It belongs to the GreA/GreB family.

Its function is as follows. Necessary for efficient RNA polymerase transcription elongation past template-encoded arresting sites. The arresting sites in DNA have the property of trapping a certain fraction of elongating RNA polymerases that pass through, resulting in locked ternary complexes. Cleavage of the nascent transcript by cleavage factors such as GreA or GreB allows the resumption of elongation from the new 3'terminus. GreA releases sequences of 2 to 3 nucleotides. In Lactococcus lactis subsp. cremoris (strain MG1363), this protein is Transcription elongation factor GreA.